The chain runs to 541 residues: Calcium-dependent protein kinase 26 (541 aa).

Residues 1–11 (MGQCCTGGGKA) are compositionally biased toward gly residues. The disordered stretch occupies residues 1 to 74 (MGQCCTGGGK…AGPIGEVLER (74 aa)). Residue Gly-2 is the site of N-myristoyl glycine attachment. Positions 38–67 (AKQQPCSPAAKAAATEAAAAASSSKKPAGP) are enriched in low complexity. A Protein kinase domain is found at 83-341 (YSIGKELGRG…AFQVLNHPWI (259 aa)). Residues 89 to 97 (LGRGQFGVT) and Lys-112 contribute to the ATP site. The active-site Proton acceptor is Asp-207. The autoinhibitory domain stretch occupies residues 347 to 377 (APDVPLDNVVLNRLKQFRAMNQFKKAALRII). 4 EF-hand domains span residues 384-419 (EEIK…QGTK), 420-455 (FSDN…MNKM), 456-491 (DREE…QGLY), and 493-526 (ANEI…GSGC). Ca(2+) contacts are provided by Asp-397, Asp-399, Ser-401, Thr-403, Glu-408, Asp-433, Asp-435, Asn-437, Glu-444, Asp-469, Asp-471, Ser-473, Tyr-475, Glu-480, Asp-504, Asn-506, Asp-508, Arg-510, and Glu-515.

Belongs to the protein kinase superfamily. Ser/Thr protein kinase family. CDPK subfamily. Specifically expressed in heading panicles, spikelets and mature pollen grains. Not expressed in vegetative tissues.

The protein localises to the membrane. The catalysed reaction is L-seryl-[protein] + ATP = O-phospho-L-seryl-[protein] + ADP + H(+). It carries out the reaction L-threonyl-[protein] + ATP = O-phospho-L-threonyl-[protein] + ADP + H(+). Activated by calcium. Autophosphorylation may play an important role in the regulation of the kinase activity. Its function is as follows. May play a role in signal transduction pathways that involve calcium as a second messenger. The polypeptide is Calcium-dependent protein kinase 26 (Oryza sativa subsp. japonica (Rice)).